A 359-amino-acid polypeptide reads, in one-letter code: Cytochrome c oxidase subunit 2 (359 aa).

A signal peptide spans 1–28 (MEQQNKRGLKRKALLGGVLGSGGLAMAG). A lipid anchor (N-palmitoyl cysteine) is attached at Cys-29. Cys-29 carries the S-diacylglycerol cysteine lipid modification. Helical transmembrane passes span 64–84 (VWVAAWIIGIIMWGLMLTAIF) and 107–127 (VPLELVLTIVPIIIVMVLFFF). Residues His-244, Cys-285, Glu-287, Cys-289, His-293, and Met-296 each contribute to the Cu cation site. Residues 338-359 (STAPFVSDRTGTRDGENFQTPA) form a disordered region.

The protein belongs to the cytochrome c oxidase subunit 2 family. In terms of assembly, associates with subunits I, III and IV to form cytochrome c oxidase. The cofactor is binuclear copper center (CuA).

It localises to the cell membrane. The enzyme catalyses 4 Fe(II)-[cytochrome c] + O2 + 8 H(+)(in) = 4 Fe(III)-[cytochrome c] + 2 H2O + 4 H(+)(out). Functionally, subunits I and II form the functional core of the enzyme complex. Electrons originating in cytochrome c are transferred via heme a and Cu(A) to the binuclear center formed by heme a3 and Cu(B). The protein is Cytochrome c oxidase subunit 2 (ctaC) of Corynebacterium efficiens (strain DSM 44549 / YS-314 / AJ 12310 / JCM 11189 / NBRC 100395).